The chain runs to 498 residues: MGINPTTSGPEVSSREKKNLGHIVQIIGPVLDVAFPPGKMPNIYNALVVKGRDTVGQQINVTCEVQQLLGNNRVRAVAMSATDGLMRGMEVIDTGTPLSVPVGGATLGRIFNVLGEPIDNLGPVDTRTTSPIHRSAPTFIQLDTKLSIFETGIKVVDLLAPYRRGGKIGLFGGAGVGKTVLIMELINNIAKAHGGVSVFGGVGERTREGNDLYMEMKESGVINEQNIAESKVALVYGQMNEPPGARMRVGLTALTMAEYFRDVNEQDVLLFIDNIFRFVQAGSEVSALLGRMPSAVGYQPTLSTEMGSLQERITSTKEGSITSIQAVYVPADDLTDPAPATTFAHLDATTVLSRGLAAKGIYPAVDPLDSTSTMLQPRIVGEEHYETAQRVKQTLQRYKELQDIIAILGLDELSEEDRLTVARARKIERFLSQPFFVAEVFTGSAGKYVGLVETIRGFNLILSGELDSLPEQAFYLVGNIDEATAKATNLEMESNLKK.

Residue 172–179 (GGAGVGKT) coordinates ATP.

The protein belongs to the ATPase alpha/beta chains family. As to quaternary structure, F-type ATPases have 2 components, CF(1) - the catalytic core - and CF(0) - the membrane proton channel. CF(1) has five subunits: alpha(3), beta(3), gamma(1), delta(1), epsilon(1). CF(0) has four main subunits: a(1), b(1), b'(1) and c(9-12).

It localises to the plastid. The protein localises to the chloroplast thylakoid membrane. The enzyme catalyses ATP + H2O + 4 H(+)(in) = ADP + phosphate + 5 H(+)(out). Functionally, produces ATP from ADP in the presence of a proton gradient across the membrane. The catalytic sites are hosted primarily by the beta subunits. The sequence is that of ATP synthase subunit beta, chloroplastic from Phaseolus vulgaris (Kidney bean).